Reading from the N-terminus, the 346-residue chain is 3-keto-steroid reductase ERG27 (346 aa).

NADP(+) is bound by residues leucine 19, threonine 42, and lysine 48. Catalysis depends on proton donor residues serine 182 and tyrosine 205. Residues tyrosine 205, lysine 209, and serine 241 each coordinate NADP(+). The active-site Lowers pKa of active site Tyr is lysine 209. A helical transmembrane segment spans residues 242 to 262; sequence FSFFQYLNVFTYYGMLFLFYL. N-linked (GlcNAc...) asparagine glycosylation is present at asparagine 272.

This sequence belongs to the short-chain dehydrogenases/reductases (SDR) family. ERG27 subfamily. As to quaternary structure, heterotetramer of ERG25, ERG26, ERG27 and ERG28. ERG28 acts as a scaffold to tether ERG27 and other 4,4-demethylation-related enzymes, forming a demethylation enzyme complex, in the endoplasmic reticulum. Interacts with ERG25 and ERG28. Also interacts with ERG7, but only in lipid particles.

The protein resides in the endoplasmic reticulum membrane. It is found in the lipid droplet. It catalyses the reaction 3-dehydro-4alpha-methylzymosterol + NADPH + H(+) = 4alpha-methylzymosterol + NADP(+). It functions in the pathway steroid biosynthesis; zymosterol biosynthesis; zymosterol from lanosterol: step 5/6. Its function is as follows. 3-keto-steroid reductase; part of the third module of ergosterol biosynthesis pathway that includes the late steps of the pathway. ERG27 is a catalytic component of the C-4 demethylation complex that catalyzes the reduction of the keto group on the C-3. The third module or late pathway involves the ergosterol synthesis itself through consecutive reactions that mainly occur in the endoplasmic reticulum (ER) membrane. Firstly, the squalene synthase ERG9 catalyzes the condensation of 2 farnesyl pyrophosphate moieties to form squalene, which is the precursor of all steroids. Squalene synthase is crucial for balancing the incorporation of farnesyl diphosphate (FPP) into sterol and nonsterol isoprene synthesis. Secondly, the squalene epoxidase ERG1 catalyzes the stereospecific oxidation of squalene to (S)-2,3-epoxysqualene, which is considered to be a rate-limiting enzyme in steroid biosynthesis. Then, the lanosterol synthase ERG7 catalyzes the cyclization of (S)-2,3 oxidosqualene to lanosterol, a reaction that forms the sterol core. In the next steps, lanosterol is transformed to zymosterol through a complex process involving various demethylation, reduction and desaturation reactions. The lanosterol 14-alpha-demethylase ERG11 (also known as CYP51) catalyzes C14-demethylation of lanosterol to produce 4,4'-dimethyl cholesta-8,14,24-triene-3-beta-ol, which is critical for ergosterol biosynthesis. The C-14 reductase ERG24 reduces the C14=C15 double bond of 4,4-dimethyl-cholesta-8,14,24-trienol to produce 4,4-dimethyl-cholesta-8,24-dienol. 4,4-dimethyl-cholesta-8,24-dienol is substrate of the C-4 demethylation complex ERG25-ERG26-ERG27 in which ERG25 catalyzes the three-step monooxygenation required for the demethylation of 4,4-dimethyl and 4alpha-methylsterols, ERG26 catalyzes the oxidative decarboxylation that results in a reduction of the 3-beta-hydroxy group at the C-3 carbon to an oxo group, and ERG27 is responsible for the reduction of the keto group on the C-3. ERG28 has a role as a scaffold to help anchor ERG25, ERG26 and ERG27 to the endoplasmic reticulum and ERG29 regulates the activity of the iron-containing C4-methylsterol oxidase ERG25. Then, the sterol 24-C-methyltransferase ERG6 catalyzes the methyl transfer from S-adenosyl-methionine to the C-24 of zymosterol to form fecosterol. The C-8 sterol isomerase ERG2 catalyzes the reaction which results in unsaturation at C-7 in the B ring of sterols and thus converts fecosterol to episterol. The sterol-C5-desaturase ERG3 then catalyzes the introduction of a C-5 double bond in the B ring to produce 5-dehydroepisterol. The C-22 sterol desaturase ERG5 further converts 5-dehydroepisterol into ergosta-5,7,22,24(28)-tetraen-3beta-ol by forming the C-22(23) double bond in the sterol side chain. Finally, ergosta-5,7,22,24(28)-tetraen-3beta-ol is substrate of the C-24(28) sterol reductase ERG4 to produce ergosterol. Functionally, facilitates the association of ERG7 with lipid particles preventing its digestion in the endoplasmic reticulum and the lipid particles. This chain is 3-keto-steroid reductase ERG27, found in Candida albicans (strain SC5314 / ATCC MYA-2876) (Yeast).